The chain runs to 78 residues: Acyl carrier protein (78 aa).

A Carrier domain is found at 2–77 (SDIADRVKKI…DAIKFLEKNS (76 aa)). Ser37 is subject to O-(pantetheine 4'-phosphoryl)serine.

Belongs to the acyl carrier protein (ACP) family. Post-translationally, 4'-phosphopantetheine is transferred from CoA to a specific serine of apo-ACP by AcpS. This modification is essential for activity because fatty acids are bound in thioester linkage to the sulfhydryl of the prosthetic group.

The protein resides in the cytoplasm. Its pathway is lipid metabolism; fatty acid biosynthesis. In terms of biological role, carrier of the growing fatty acid chain in fatty acid biosynthesis. The polypeptide is Acyl carrier protein (Methylobacterium sp. (strain 4-46)).